A 400-amino-acid polypeptide reads, in one-letter code: Subtilisin-like protease 1 (400 aa).

The signal sequence occupies residues methionine 1–alanine 20. A propeptide spanning residues alanine 21–asparagine 119 is cleaved from the precursor. Residues serine 42–glutamine 117 enclose the Inhibitor I9 domain. The N-linked (GlcNAc...) asparagine glycan is linked to asparagine 82. The 273-residue stretch at threonine 128–alanine 400 folds into the Peptidase S8 domain. Residues aspartate 160, histidine 192, and serine 345 each act as charge relay system in the active site.

It belongs to the peptidase S8 family.

Its subcellular location is the secreted. Major secreted subtilisin-like serine endopeptidase. Mediates the degradation of collagen, the major structural protein in the mammalian host. Degrades the nonhelical regions of collagen that function in the cross-linking of the helical components. May function as virulence factor involved in epidermal wing necrosis observed in white nose syndrome (WNS) in bats. This is Subtilisin-like protease 1 from Pseudogymnoascus destructans (strain ATCC MYA-4855 / 20631-21) (Bat white-nose syndrome fungus).